Consider the following 650-residue polypeptide: Hemocyanin subunit 2 (650 aa).

2 O-linked (GalNAc...) serine glycosylation sites follow: Ser120 and Ser172. 3 residues coordinate Cu cation: His193, His197, and His225. An N-linked (GlcNAc...) asparagine glycan is attached at Asn309. Residues His344, His348, and His384 each coordinate Cu cation.

Belongs to the tyrosinase family. Hemocyanin subfamily. In terms of assembly, hexamer of a number of different chains, of which five have been identified. In terms of processing, contains one N-glycosylated and three O-glycosylated residues. The position of one of the O-glycosylated residues has not been determined. O-linked glycan at Ser-120 may be composed of two GalNAc, three Gal, and two N-acetylneuraminic acid units for a total 1525-Da MW. As to expression, hemolymph.

It is found in the secreted. The protein localises to the extracellular space. Hemocyanins are copper-containing oxygen carriers occurring freely dissolved in the hemolymph of many mollusks and arthropods. This chain is Hemocyanin subunit 2, found in Carcinus aestuarii (Green crab).